The chain runs to 248 residues: UDP-2,3-diacylglucosamine hydrolase (248 aa).

Residues Asp7, His9, Asp40, Asn78, and His113 each contribute to the Mn(2+) site. Residue 78–79 (NR) participates in substrate binding. Positions 121, 159, 163, 166, and 194 each coordinate substrate. Mn(2+)-binding residues include His194 and His196.

The protein belongs to the LpxH family. The cofactor is Mn(2+).

Its subcellular location is the cell inner membrane. The catalysed reaction is UDP-2-N,3-O-bis[(3R)-3-hydroxytetradecanoyl]-alpha-D-glucosamine + H2O = 2-N,3-O-bis[(3R)-3-hydroxytetradecanoyl]-alpha-D-glucosaminyl 1-phosphate + UMP + 2 H(+). It participates in glycolipid biosynthesis; lipid IV(A) biosynthesis; lipid IV(A) from (3R)-3-hydroxytetradecanoyl-[acyl-carrier-protein] and UDP-N-acetyl-alpha-D-glucosamine: step 4/6. In terms of biological role, hydrolyzes the pyrophosphate bond of UDP-2,3-diacylglucosamine to yield 2,3-diacylglucosamine 1-phosphate (lipid X) and UMP by catalyzing the attack of water at the alpha-P atom. Involved in the biosynthesis of lipid A, a phosphorylated glycolipid that anchors the lipopolysaccharide to the outer membrane of the cell. In Pseudomonas fluorescens (strain Pf0-1), this protein is UDP-2,3-diacylglucosamine hydrolase.